We begin with the raw amino-acid sequence, 461 residues long: Carbamoyl phosphate synthase arginine-specific small chain (461 aa).

Residues 240–427 (HVALIDCGVK…LENVQMYKDN (188 aa)) enclose the Glutamine amidotransferase type-1 domain. The active-site Nucleophile is cysteine 316. Catalysis depends on residues histidine 400 and glutamate 402.

The protein belongs to the CarA family. As to quaternary structure, heterodimer composed of 2 chains; the small (or glutamine) chain promotes the hydrolysis of glutamine to ammonia, which is used by the large (or ammonia) chain to synthesize carbamoyl phosphate.

The protein localises to the cytoplasm. The catalysed reaction is hydrogencarbonate + L-glutamine + 2 ATP + H2O = carbamoyl phosphate + L-glutamate + 2 ADP + phosphate + 2 H(+). The enzyme catalyses L-glutamine + H2O = L-glutamate + NH4(+). It functions in the pathway amino-acid biosynthesis; L-arginine biosynthesis; carbamoyl phosphate from bicarbonate: step 1/1. Functionally, small subunit of the arginine-specific carbamoyl phosphate synthase (CPSase). CPSase catalyzes the formation of carbamoyl phosphate from the ammonia moiety of glutamine, carbonate, and phosphate donated by ATP, constituting the first step of 2 biosynthetic pathways, one leading to arginine and/or urea and the other to pyrimidine nucleotides. The small subunit (glutamine amidotransferase) binds and cleaves glutamine to supply the large subunit with the substrate ammonia. The sequence is that of Carbamoyl phosphate synthase arginine-specific small chain (CPA1) from Chaetomium globosum (strain ATCC 6205 / CBS 148.51 / DSM 1962 / NBRC 6347 / NRRL 1970) (Soil fungus).